We begin with the raw amino-acid sequence, 78 residues long: MKLTCMMIVAVLFLTAWTFVTADDSRNGLKNLFPKARHEMKNPDASKLNKRDGCSNAGGFCGIHPGLCCSEICLVWCT.

The N-terminal stretch at 1–22 is a signal peptide; the sequence is MKLTCMMIVAVLFLTAWTFVTA. Residues 23-53 constitute a propeptide that is removed on maturation; it reads DDSRNGLKNLFPKARHEMKNPDASKLNKRDG. 3 disulfide bridges follow: Cys54–Cys69, Cys61–Cys73, and Cys68–Cys77.

Belongs to the conotoxin O1 superfamily. Expressed by the venom duct.

It is found in the secreted. Its function is as follows. Delta-conotoxins bind to site 6 of voltage-gated sodium channels (Nav) and inhibit the inactivation process. In Conus striatus (Striated cone), this protein is Delta-conotoxin-like S6.8.